The primary structure comprises 172 residues: Large ribosomal subunit protein uL10 (172 aa).

It belongs to the universal ribosomal protein uL10 family. As to quaternary structure, part of the ribosomal stalk of the 50S ribosomal subunit. The N-terminus interacts with L11 and the large rRNA to form the base of the stalk. The C-terminus forms an elongated spine to which L12 dimers bind in a sequential fashion forming a multimeric L10(L12)X complex.

Forms part of the ribosomal stalk, playing a central role in the interaction of the ribosome with GTP-bound translation factors. This chain is Large ribosomal subunit protein uL10, found in Rhodopseudomonas palustris (strain BisA53).